Reading from the N-terminus, the 49-residue chain is Large ribosomal subunit protein bL33B (49 aa).

Belongs to the bacterial ribosomal protein bL33 family.

The sequence is that of Large ribosomal subunit protein bL33B (rpmG2) from Listeria innocua serovar 6a (strain ATCC BAA-680 / CLIP 11262).